The sequence spans 639 residues: CTTNBP2 N-terminal-like protein (639 aa).

Residues 87 to 285 (MKQCKNMQER…DLEASHQHSS (199 aa)) are a coiled coil. 2 positions are modified to phosphoserine: Ser-284 and Ser-285. Disordered regions lie at residues 387–430 (VENG…PCSS), 463–490 (RHKF…LSPT), and 511–609 (RFTS…AASL). 2 stretches are compositionally biased toward low complexity: residues 407–430 (PSSG…PCSS) and 467–477 (QSQADQDQQAS). A phosphoserine mark is found at Ser-481, Ser-488, Ser-523, Ser-527, Ser-560, Ser-563, and Ser-568. The segment covering 511–529 (RFTSQQGPIKPVSPNSSPF) has biased composition (polar residues). 2 positions are modified to phosphothreonine: Thr-570 and Thr-590. Low complexity predominate over residues 587 to 600 (PGLTPSPSATTPLT). Ser-592 is modified (phosphoserine).

As to quaternary structure, interacts with CTTN/cortactin; this interaction may redistribute CTTN to stress fibers. May form homomers. Associates with the core of STRIPAK complexes composed of PP2A catalytic and scaffolding subunits, the striatins (PP2A regulatory subunits), the striatin-associated proteins MOB4, STRIP1 and STRIP2, PDCD10 and members of the STE20 kinases, such as STK24 and STK26.

It localises to the cell projection. The protein localises to the lamellipodium. It is found in the cytoplasm. The protein resides in the cytoskeleton. Its subcellular location is the stress fiber. Functionally, regulates lamellipodial actin dynamics in a CTTN-dependent manner. Associates with core striatin-interacting phosphatase and kinase (STRIPAK) complex to form CTTNBP2NL-STRIPAK complexes. STRIPAK complexes have critical roles in protein (de)phosphorylation and are regulators of multiple signaling pathways including Hippo, MAPK, nuclear receptor and cytoskeleton remodeling. Different types of STRIPAK complexes are involved in a variety of biological processes such as cell growth, differentiation, apoptosis, metabolism and immune regulation. This Pongo abelii (Sumatran orangutan) protein is CTTNBP2 N-terminal-like protein (CTTNBP2NL).